The following is a 61-amino-acid chain: Small ribosomal subunit protein uS14 (61 aa).

4 residues coordinate Zn(2+): cysteine 24, cysteine 27, cysteine 40, and cysteine 43.

It belongs to the universal ribosomal protein uS14 family. Zinc-binding uS14 subfamily. Part of the 30S ribosomal subunit. Contacts proteins S3 and S10. Zn(2+) is required as a cofactor.

Binds 16S rRNA, required for the assembly of 30S particles and may also be responsible for determining the conformation of the 16S rRNA at the A site. The protein is Small ribosomal subunit protein uS14 of Campylobacter jejuni subsp. jejuni serotype O:6 (strain 81116 / NCTC 11828).